Reading from the N-terminus, the 549-residue chain is Cation/acetate symporter ActP (549 aa).

The next 13 helical transmembrane spans lie at 33–53, 77–97, 103–123, 148–168, 183–203, 206–226, 262–282, 303–323, 355–375, 404–424, 428–448, 464–484, and 493–513; these read WQAIIMFLIFVVFTLGITYWA, LAIAGDYMSAASFLGISALVF, GLIYSLGFLVGWPIILFLIAE, ILSACGSLVVVALYLIAQMVG, IAVVLVGVLMMMYVLFGGMLA, WVQIIKAVLLLFGASFMAFMV, ISALSLGLGLMFGTAGLPHIL, GFMGYFYILTFIIGFGAIMLV, LFLGFISAVAFATILAVVAGL, VSKITVLVLGVIAIILGVLFE, IAFMVGLAFAIAASCNFPIIL, GGWLGLLTAVVLMILGPTIWV, and IFPYEYPALFSISVAFLGIWF.

Belongs to the sodium:solute symporter (SSF) (TC 2.A.21) family.

It is found in the cell inner membrane. In terms of biological role, transports acetate. This is Cation/acetate symporter ActP from Salmonella agona (strain SL483).